The primary structure comprises 264 residues: Thymidylate synthase (264 aa).

Position 21 (R21) interacts with dUMP. H51 lines the (6R)-5,10-methylene-5,6,7,8-tetrahydrofolate pocket. 126–127 provides a ligand contact to dUMP; that stretch reads RR. The Nucleophile role is filled by C146. DUMP-binding positions include 166 to 169, N177, and 207 to 209; these read RSCD and HLY. Residue D169 coordinates (6R)-5,10-methylene-5,6,7,8-tetrahydrofolate. Position 263 (A263) interacts with (6R)-5,10-methylene-5,6,7,8-tetrahydrofolate.

It belongs to the thymidylate synthase family. Bacterial-type ThyA subfamily. Homodimer.

It is found in the cytoplasm. It catalyses the reaction dUMP + (6R)-5,10-methylene-5,6,7,8-tetrahydrofolate = 7,8-dihydrofolate + dTMP. The protein operates within pyrimidine metabolism; dTTP biosynthesis. Catalyzes the reductive methylation of 2'-deoxyuridine-5'-monophosphate (dUMP) to 2'-deoxythymidine-5'-monophosphate (dTMP) while utilizing 5,10-methylenetetrahydrofolate (mTHF) as the methyl donor and reductant in the reaction, yielding dihydrofolate (DHF) as a by-product. This enzymatic reaction provides an intracellular de novo source of dTMP, an essential precursor for DNA biosynthesis. In Citrobacter koseri (strain ATCC BAA-895 / CDC 4225-83 / SGSC4696), this protein is Thymidylate synthase.